A 186-amino-acid polypeptide reads, in one-letter code: Calcium load-activated calcium channel homolog (186 aa).

Residues 1–6 (MLGDCL) lie on the Cytoplasmic side of the membrane. The chain crosses the membrane as a helical span at residues 7 to 27 (LIIAIAFGTALAGEGITWLLV). Residues 28–87 (YRSDHYKRLKADMDKKTKKLEKKKQEVGDTNDKNIKRKLEREEERLKATNRDMSMFKMKS) lie on the Lumenal side of the membrane. The stretch at 30–86 (SDHYKRLKADMDKKTKKLEKKKQEVGDTNDKNIKRKLEREEERLKATNRDMSMFKMK) forms a coiled coil. The helical transmembrane segment at 88–108 (MFAIGLAFTALLSTFNSIFEG) threads the bilayer. Residues 109-134 (RVVAKLPFYPIGFIQGLSHRNLIGED) are Cytoplasmic-facing. Positions 135–151 (MTDCSFIFLYILCTMTV) form an intramembrane region, pore-forming. The Cytoplasmic segment spans residues 152–186 (RQNLQKILGFAPSRAMARQQSSPWAPPNSQMNYLR).

The protein belongs to the TMCO1 family. As to quaternary structure, homodimer and homotetramer.

It is found in the endoplasmic reticulum membrane. Its function is as follows. Calcium-selective channel required to prevent calcium stores from overfilling. This Caenorhabditis elegans protein is Calcium load-activated calcium channel homolog.